Reading from the N-terminus, the 318-residue chain is Ribosomal RNA small subunit methyltransferase H (318 aa).

S-adenosyl-L-methionine is bound by residues 34-36 (GGH), Asp57, Leu91, Asp110, and Gln117.

This sequence belongs to the methyltransferase superfamily. RsmH family.

The protein resides in the cytoplasm. The enzyme catalyses cytidine(1402) in 16S rRNA + S-adenosyl-L-methionine = N(4)-methylcytidine(1402) in 16S rRNA + S-adenosyl-L-homocysteine + H(+). Functionally, specifically methylates the N4 position of cytidine in position 1402 (C1402) of 16S rRNA. This chain is Ribosomal RNA small subunit methyltransferase H, found in Chlorobaculum parvum (strain DSM 263 / NCIMB 8327) (Chlorobium vibrioforme subsp. thiosulfatophilum).